A 21-amino-acid chain; its full sequence is Trypsin (21 aa).

This sequence belongs to the peptidase S1 family.

The protein localises to the secreted. It is found in the extracellular space. It carries out the reaction Preferential cleavage: Arg-|-Xaa, Lys-|-Xaa.. The polypeptide is Trypsin (Apis mellifera scutellata (Africanized honey bee)).